The chain runs to 287 residues: Pyridoxal kinase PdxY (287 aa).

Residues Ser-9 and 44 to 45 (MQ) each bind substrate. ATP-binding residues include Asp-111, Ala-142, Glu-147, and Lys-180. Asp-221 provides a ligand contact to substrate.

The protein belongs to the pyridoxine kinase family. PdxY subfamily. As to quaternary structure, homodimer. Mg(2+) serves as cofactor.

It catalyses the reaction pyridoxal + ATP = pyridoxal 5'-phosphate + ADP + H(+). The protein operates within cofactor metabolism; pyridoxal 5'-phosphate salvage; pyridoxal 5'-phosphate from pyridoxal: step 1/1. Pyridoxal kinase involved in the salvage pathway of pyridoxal 5'-phosphate (PLP). Catalyzes the phosphorylation of pyridoxal to PLP. The polypeptide is Pyridoxal kinase PdxY (Burkholderia pseudomallei (strain K96243)).